The following is a 779-amino-acid chain: Ribonucleoside-diphosphate reductase large subunit (779 aa).

Residues serine 178, 193–194, glycine 222, 420–424, and 614–618 each bind substrate; these read SC, NLCIE, and PTATS. Cysteine 194 and cysteine 440 are disulfide-bonded. Asparagine 420 functions as the Proton acceptor in the catalytic mechanism. Residue cysteine 422 is the Cysteine radical intermediate of the active site. The active-site Proton acceptor is glutamate 424.

This sequence belongs to the ribonucleoside diphosphate reductase large chain family. As to quaternary structure, heterotetramer composed of a homodimer of the large subunit (R1) and a homodimer of the small subunit (R2). Larger multisubunit protein complex are also active, composed of (R1)n(R2)n.

It catalyses the reaction a 2'-deoxyribonucleoside 5'-diphosphate + [thioredoxin]-disulfide + H2O = a ribonucleoside 5'-diphosphate + [thioredoxin]-dithiol. With respect to regulation, under complex allosteric control mediated by deoxynucleoside triphosphates and ATP binding. The type of nucleotide bound at the specificity site determines substrate preference. It seems probable that ATP makes the enzyme reduce CDP and UDP, dGTP favors ADP reduction and dTTP favors GDP reduction. Functionally, ribonucleoside-diphosphate reductase holoenzyme provides the precursors necessary for viral DNA synthesis. Allows virus growth in non-dividing cells. Catalyzes the biosynthesis of deoxyribonucleotides from the corresponding ribonucleotides. The protein is Ribonucleoside-diphosphate reductase large subunit of African swine fever virus (isolate Tick/Malawi/Lil 20-1/1983) (ASFV).